Reading from the N-terminus, the 308-residue chain is 11-beta-hydroxysteroid dehydrogenase-like 2 (308 aa).

Residues 10-30 (FLLPPLTISFLVLFYPFYLFT) form a helical; Signal-anchor for type II membrane protein membrane-spanning segment. NADP(+) contacts are provided by residues 53 to 79 (GASSGIGEHVAYEYAKKGAKLALVARR) and Asp104. Ser183 is a binding site for substrate. Tyr196 (proton acceptor) is an active-site residue. Residues 196–200 (YSASK) and Lys200 each bind NADP(+).

The protein belongs to the short-chain dehydrogenases/reductases (SDR) family.

The protein resides in the membrane. This Arabidopsis thaliana (Mouse-ear cress) protein is 11-beta-hydroxysteroid dehydrogenase-like 2 (HSD2).